The sequence spans 477 residues: Proton-coupled amino acid transporter 3 (477 aa).

The Cytoplasmic segment spans residues 1–54; that stretch reads MGNVPLLREVGKCQRNMFGRSTASSKGSSNSRSSSSTSPKKGPRREADALMFIQ. Positions 19 to 40 are enriched in low complexity; it reads GRSTASSKGSSNSRSSSSTSPK. The disordered stretch occupies residues 19 to 43; it reads GRSTASSKGSSNSRSSSSTSPKKGP. Residues 55-75 traverse the membrane as a helical segment; the sequence is IFIHLLKSNIGTGFLGLPLAV. The Extracellular segment spans residues 76–77; that stretch reads KN. Residues 78–98 traverse the membrane as a helical segment; it reads AGLLVGPVSLLAIGALTVHCM. At 99 to 144 the chain is on the cytoplasmic side; sequence DILLNCACHLTQRLQRSFVNYEETTMYSLETCPSPWLRTHSVWGRY. Residues 145–165 form a helical membrane-spanning segment; the sequence is VVSFLLIVTQLGFCSVYFMFL. The Extracellular portion of the chain corresponds to 166–202; it reads ADNLQQIMEEAHFTSNVCQPRQSLVMTSILDTRFYML. A helical transmembrane segment spans residues 203 to 223; it reads TILPFLILLVLIQNPQVLSIF. Residues 224–225 are Cytoplasmic-facing; it reads ST. The helical transmembrane segment at 226–246 threads the bilayer; the sequence is LATITTLSSLALIFEYLIQTP. At 247–259 the chain is on the extracellular side; it reads HHSNLPLVANWKT. The chain crosses the membrane as a helical span at residues 260–280; sequence FLLFFGTAIFTFEGVGMVLPL. Residues 281–291 are Cytoplasmic-facing; sequence KSQMKSPQQFP. Residues 292-312 form a helical membrane-spanning segment; that stretch reads AVLYLGMSFVIFLYICLGTLG. At 313-344 the chain is on the extracellular side; that stretch reads YMKFGTDTQASITLNLPICWLYQSVKLMYSVG. The helical transmembrane segment at 345–365 threads the bilayer; that stretch reads IFFTYALQFHVPAEIIVPYVV. Topologically, residues 366 to 374 are cytoplasmic; sequence SRVSENWAL. Residues 375–395 traverse the membrane as a helical segment; sequence FVDLTVRTALVCLTCFSAVLI. Residues 396–399 are Extracellular-facing; the sequence is PRLD. The helical transmembrane segment at 400 to 420 threads the bilayer; that stretch reads LVISLVGSVSSSALAIIIPPL. Over 421-432 the chain is Cytoplasmic; sequence LEIATFYSENIS. Residues 433–453 form a helical membrane-spanning segment; that stretch reads CATIVKDIMISILGLLGCVLG. At 454 to 477 the chain is on the extracellular side; it reads TYQALYEMTQQTHFYMANSTRVHI.

The protein belongs to the amino acid/polyamine transporter 2 family. Specifically expressed in testis.

Its subcellular location is the membrane. This chain is Proton-coupled amino acid transporter 3 (Slc36a3), found in Mus musculus (Mouse).